Reading from the N-terminus, the 549-residue chain is Oxygen-dependent choline dehydrogenase (549 aa).

FAD is bound at residue 4-33 (DFVIIGSGSAGSALAYRLSEDGKNSVLVIE). His465 serves as the catalytic Proton acceptor. Residues 530–549 (PLARSNQEPWINPRAAVSDR) form a disordered region.

The protein belongs to the GMC oxidoreductase family. FAD serves as cofactor.

It catalyses the reaction choline + A = betaine aldehyde + AH2. The enzyme catalyses betaine aldehyde + NAD(+) + H2O = glycine betaine + NADH + 2 H(+). It functions in the pathway amine and polyamine biosynthesis; betaine biosynthesis via choline pathway; betaine aldehyde from choline (cytochrome c reductase route): step 1/1. Functionally, involved in the biosynthesis of the osmoprotectant glycine betaine. Catalyzes the oxidation of choline to betaine aldehyde and betaine aldehyde to glycine betaine at the same rate. This is Oxygen-dependent choline dehydrogenase from Rhizobium etli (strain ATCC 51251 / DSM 11541 / JCM 21823 / NBRC 15573 / CFN 42).